The sequence spans 154 residues: MAARLCCQLDPARDVLCLRPVGAESRGRPFSGPLGALSSSSPPAVPTDHGAHLSLRGLPVCAFSSAGPCALRFTSARRMETTVNAHQFLPKVLHKRTLGLSAMSTTDLEAYFKDCLFKDWEELGEELRLKVFVLGGCRHKLVCAPAPCNFFTSA.

The tract at residues 68-117 is mitochondrial targeting sequence; it reads PCALRFTSARRMETTVNAHQFLPKVLHKRTLGLSAMSTTDLEAYFKDCLF.

It belongs to the orthohepadnavirus protein X family. In terms of assembly, may form homodimer. May interact with host CEBPA, CFLAR, CREB1, DDB1, E4F1, HBXIP, HSPD1/HSP60, NFKBIA, POLR2E and SMAD4. Interacts with host SMC5-SMC6 complex and induces its degradation. Interacts with host TRPC4AP; leading to prevent ubiquitination of TRPC4AP. Interacts with host PLSCR1; this interaction promotes ubiquitination and degradation of HBx and impairs HBx-mediated cell proliferation. In terms of processing, a fraction may be phosphorylated in insect cells and HepG2 cells, a human hepatoblastoma cell line. Phosphorylated in vitro by host protein kinase C or mitogen-activated protein kinase. N-acetylated in insect cells.

It is found in the host cytoplasm. The protein localises to the host nucleus. It localises to the host mitochondrion. Its function is as follows. Multifunctional protein that plays a role in silencing host antiviral defenses and promoting viral transcription. Does not seem to be essential for HBV infection. May be directly involved in development of cirrhosis and liver cancer (hepatocellular carcinoma). Most of cytosolic activities involve modulation of cytosolic calcium. The effect on apoptosis is controversial depending on the cell types in which the studies have been conducted. May induce apoptosis by localizing in mitochondria and causing loss of mitochondrial membrane potential. May also modulate apoptosis by binding host CFLAR, a key regulator of the death-inducing signaling complex (DISC). Promotes viral transcription by using the host E3 ubiquitin ligase DDB1 to target the SMC5-SMC6 complex to proteasomal degradation. This host complex would otherwise bind to viral episomal DNA, and prevents its transcription. Moderately stimulates transcription of many different viral and cellular transcription elements. Promoters and enhancers stimulated by HBx contain DNA binding sites for NF-kappa-B, AP-1, AP-2, c-EBP, ATF/CREB, or the calcium-activated factor NF-AT. The sequence is that of Protein X from Homo sapiens (Human).